Consider the following 712-residue polypeptide: MTHLSPEAFAIIEGRHADPFRYLGQHDVDGRTVIRAFLPEASRVEAVGDNGEVAPLARIHDAGLFTGTMSGPQRYRLRATFGDHVTDLEDPYRFLPILTDFDLHLLGEGNHERLYDKLGAHPMVLDGVDGVGFVVLAPNARRVSVVGDFNFWNARRHPMRVRGNGYWELFIPRAKAGDHYKFDIIGPQGEHLPLKSDPMAFAAEMRPKTASIVVDETRLPRPRPAPSDINKLDRPVSIYEVHLGSWRRKDNNQWLTYRELAEQLPAYARDMGFTHIEFLPVSEHPFDGSWGYQPTGLFAPTSRFGSPEDFCALVDACHREGLAVWLDWVPGHFPDDPHGLGHFDGTALYEHANPMQGRHLDWGTLIYNYGRTEVANFLRSNALFWLERYGIDGLRVDAVASMLYLDYSRPSGGWIPNKYGGRENLEAIEFLRRTNIEVFGHFPQATTAAEESTAWPQVSRPVDIGGLGFGYKWNMGWMHDTLRYVGKDPIHRKYHHGEILFGLHYAFSENFILPLSHDEVVHGKRSILGRMPGDDWQRFANLRAYYSFMFGHPGKKLLFMGCEIAQEREWNHDSSLDWHLLGDAKYAGIQALIRDLNHLYRNQPALHERDCEPEGFDWLITEDADRNVFAWVRKGFDERARCVVVVNFSPNVYYNYRVRVPLGGTWREVFNSDSSHYGGSNVGNVGQVHASEDQQLNLILPPMAAVFLVPEA.

Asp397 acts as the Nucleophile in catalysis. Glu450 acts as the Proton donor in catalysis.

It belongs to the glycosyl hydrolase 13 family. GlgB subfamily. In terms of assembly, monomer.

It catalyses the reaction Transfers a segment of a (1-&gt;4)-alpha-D-glucan chain to a primary hydroxy group in a similar glucan chain.. It participates in glycan biosynthesis; glycogen biosynthesis. In terms of biological role, catalyzes the formation of the alpha-1,6-glucosidic linkages in glycogen by scission of a 1,4-alpha-linked oligosaccharide from growing alpha-1,4-glucan chains and the subsequent attachment of the oligosaccharide to the alpha-1,6 position. This is 1,4-alpha-glucan branching enzyme GlgB from Bradyrhizobium sp. (strain BTAi1 / ATCC BAA-1182).